We begin with the raw amino-acid sequence, 398 residues long: Steroid C26-monooxygenase (398 aa).

A heme-binding site is contributed by Cys340.

This sequence belongs to the cytochrome P450 family. Requires heme as cofactor.

The catalysed reaction is cholest-4-en-3-one + 6 reduced [2Fe-2S]-[ferredoxin] + 3 O2 + 5 H(+) = (25R)-3-oxocholest-4-en-26-oate + 6 oxidized [2Fe-2S]-[ferredoxin] + 4 H2O. The enzyme catalyses cholest-4-en-3-one + 2 reduced [2Fe-2S]-[ferredoxin] + O2 + 2 H(+) = (25R)-3-oxocholest-4-en-26-ol + 2 oxidized [2Fe-2S]-[ferredoxin] + H2O. It carries out the reaction (25R)-3-oxocholest-4-en-26-ol + 2 reduced [2Fe-2S]-[ferredoxin] + O2 + 2 H(+) = (25R)-3-oxocholest-4-en-26-al + 2 oxidized [2Fe-2S]-[ferredoxin] + 2 H2O. It catalyses the reaction (25R)-3-oxocholest-4-en-26-al + 2 reduced [2Fe-2S]-[ferredoxin] + O2 + H(+) = (25R)-3-oxocholest-4-en-26-oate + 2 oxidized [2Fe-2S]-[ferredoxin] + H2O. The catalysed reaction is cholesterol + NADPH + O2 + H(+) = 26-hydroxycholesterol + NADP(+) + H2O. The enzyme catalyses 26-hydroxycholesterol + 2 reduced [2Fe-2S]-[ferredoxin] + O2 + 2 H(+) = (3beta)-hydroxy-cholest-5-en-26-al + 2 oxidized [2Fe-2S]-[ferredoxin] + 2 H2O. It carries out the reaction (3beta)-hydroxy-cholest-5-en-26-al + NADPH + O2 = (3beta)-hydroxy-cholest-5-en-26-oate + NADP(+) + H2O. It catalyses the reaction (25S)-3-oxocholest-4-en-26-ol + 2 reduced [2Fe-2S]-[ferredoxin] + O2 + 2 H(+) = (25S)-3-oxocholest-4-en-26-al + 2 oxidized [2Fe-2S]-[ferredoxin] + 2 H2O. The catalysed reaction is (25S)-3-oxocholest-4-en-26-al + 2 reduced [2Fe-2S]-[ferredoxin] + O2 + H(+) = (25S)-3-oxocholest-4-en-26-oate + 2 oxidized [2Fe-2S]-[ferredoxin] + H2O. The protein operates within steroid metabolism; cholesterol degradation. Inhibited by econazole, clotrimazole and miconazole. Involved in the utilization of cholesterol as the sole carbon and energy source by degrading the side chain during infection. Primarily catalyzes the sequential oxidation of the terminal methyl of cholest-4-en-3-one into (25R)-26-hydroxycholest-4-en-3-one (alcohol), (25R)-26-oxocholest-4-en-3-one (aldehyde), to finally yield the carboxylic acid (25R)-3-oxocholest-4-en-26-oate. In vitro, Cyp142 catalyzes with equal preference the oxidation of both (25R)- and (25S)-26-hydroxycholest-4-en-3-one diastereomers to the corresponding carboxylic acid which is a prerequisite for entry into the beta-oxidation pathway. Also able to sequentially oxidize cholesterol itself, not only cholest-4-en-3-one. The chain is Steroid C26-monooxygenase (cyp142) from Mycobacterium tuberculosis (strain ATCC 25618 / H37Rv).